The chain runs to 507 residues: ATP synthase subunit alpha (507 aa).

ATP is bound at residue 170 to 177 (GDRQTGKT).

Belongs to the ATPase alpha/beta chains family. As to quaternary structure, F-type ATPases have 2 components, CF(1) - the catalytic core - and CF(0) - the membrane proton channel. CF(1) has five subunits: alpha(3), beta(3), gamma(1), delta(1), epsilon(1). CF(0) has three main subunits: a(1), b(2) and c(9-12). The alpha and beta chains form an alternating ring which encloses part of the gamma chain. CF(1) is attached to CF(0) by a central stalk formed by the gamma and epsilon chains, while a peripheral stalk is formed by the delta and b chains.

It localises to the cell inner membrane. The enzyme catalyses ATP + H2O + 4 H(+)(in) = ADP + phosphate + 5 H(+)(out). Produces ATP from ADP in the presence of a proton gradient across the membrane. The alpha chain is a regulatory subunit. In Thermosipho africanus (strain TCF52B), this protein is ATP synthase subunit alpha.